Here is a 334-residue protein sequence, read N- to C-terminus: B3 domain-containing protein LOC_Os12g40090 (334 aa).

The TF-B3 1 DNA-binding region spans 5–102 (RIRFFRLMTG…SFDVLIFDAS (98 aa)). The segment at 142-178 (TSTPSVLIGSPHKASTSKKLSGKTKTNPRKEPEDPNC) is disordered. The span at 154–166 (KASTSKKLSGKTK) shows a compositional bias: low complexity. Positions 227 to 326 (FVVVLQTAHV…TMTVHVIGKA (100 aa)) form a DNA-binding region, TF-B3 2.

Its subcellular location is the nucleus. This is B3 domain-containing protein LOC_Os12g40090 from Oryza sativa subsp. japonica (Rice).